The chain runs to 380 residues: DNA primase small subunit PriS (380 aa).

Residues Asp103, Asp105, and Asp284 contribute to the active site.

It belongs to the eukaryotic-type primase small subunit family. As to quaternary structure, heterodimer of a small subunit (PriS) and a large subunit (PriL). Mg(2+) is required as a cofactor. It depends on Mn(2+) as a cofactor.

Its function is as follows. Catalytic subunit of DNA primase, an RNA polymerase that catalyzes the synthesis of short RNA molecules used as primers for DNA polymerase during DNA replication. The small subunit contains the primase catalytic core and has DNA synthesis activity on its own. Binding to the large subunit stabilizes and modulates the activity, increasing the rate of DNA synthesis while decreasing the length of the DNA fragments, and conferring RNA synthesis capability. The DNA polymerase activity may enable DNA primase to also catalyze primer extension after primer synthesis. May also play a role in DNA repair. The chain is DNA primase small subunit PriS from Methanocorpusculum labreanum (strain ATCC 43576 / DSM 4855 / Z).